The sequence spans 1105 residues: Serine/threonine-protein kinase Warts (1105 aa).

A compositionally biased stretch (polar residues) spans 33 to 54 (VQNNHRNNQNYTPLRYTATNGR). Disordered regions lie at residues 33–81 (VQNN…APDV), 145–253 (CSPA…TQNG), 273–362 (GGGS…YQAR), 383–462 (QTAV…EPPS), and 514–643 (AQRE…RKEF). Pro residues predominate over residues 69–81 (MEPPPSASPAPDV). Polar residues predominate over residues 242–253 (QRGNSPVITQNG). Low complexity predominate over residues 307–320 (SMQSRQSPTQSQQS). Polar residues predominate over residues 325–343 (SPSSGIYSATSAGSPSPIT). 2 stretches are compositionally biased toward low complexity: residues 387 to 400 (APQSPSSASASNSP) and 415 to 437 (AAVVQQQQQAAAAAHQQQHQHQQ). A compositionally biased stretch (basic and acidic residues) spans 515–533 (QRERDQRERDQRERERDQQ). 2 stretches are compositionally biased toward low complexity: residues 551-576 (QSNNNNNSEIKPPSCNNNNIQISNSN) and 589-616 (NNNSSNTGANSSGGSNGSTGTTASSSTS). Positions 627-643 (PERKKISKEKEEERKEF) are enriched in basic and acidic residues. Residues 719–1020 (FVKLKPIGVG…VDEVKSHDFF (302 aa)) enclose the Protein kinase domain. ATP-binding positions include 725–733 (IGVGAFGEV) and Lys-749. Asp-843 acts as the Proton acceptor in catalysis. Disordered stretches follow at residues 881-900 (GNHSRQDSMEPWEEYSENGP) and 1038-1070 (EIKHPTDTSNFDPVDPEKLRSNDSTMSSGDDVD). The AGC-kinase C-terminal domain occupies 1021–1091 (KGIDFADMRK…FTFRRFFDDK (71 aa)).

Belongs to the protein kinase superfamily. AGC Ser/Thr protein kinase family. As to quaternary structure, interacts with yki. Interacts with jub. It depends on Mg(2+) as a cofactor.

It localises to the cytoplasm. It is found in the cytosol. The protein localises to the cytoskeleton. The protein resides in the microtubule organizing center. Its subcellular location is the centrosome. The enzyme catalyses L-seryl-[protein] + ATP = O-phospho-L-seryl-[protein] + ADP + H(+). The catalysed reaction is L-threonyl-[protein] + ATP = O-phospho-L-threonyl-[protein] + ADP + H(+). Negative regulator of Yorkie (Yki) in the Hippo/SWH (Sav/Wts/Hpo) signaling pathway that plays a pivotal role in organ size control and tumor suppression by restricting proliferation and promoting apoptosis. The core of this pathway is composed of a kinase cascade wherein Hippo (Hpo), in complex with its regulatory protein Salvador (Sav), phosphorylates and activates Warts (Wts) in complex with its regulatory protein Mats, which in turn phosphorylates and inactivates the Yorkie (Yki) oncoprotein. The Hippo/SWH signaling pathway inhibits the activity of the transcriptional complex formed by Scalloped (sd) and Yki and the target genes of this pathway include cyclin-E (cycE), diap1 and bantam. Inhibits nuclear localization of Yki. Regulates salivary gland degradation in a PI3K-dependent manner and Yki- and Sd-independent, mechanism. The protein is Serine/threonine-protein kinase Warts (wts) of Drosophila melanogaster (Fruit fly).